The following is a 143-amino-acid chain: Large ribosomal subunit protein uL11 (143 aa).

It belongs to the universal ribosomal protein uL11 family. As to quaternary structure, part of the ribosomal stalk of the 50S ribosomal subunit. Interacts with L10 and the large rRNA to form the base of the stalk. L10 forms an elongated spine to which L12 dimers bind in a sequential fashion forming a multimeric L10(L12)X complex. In terms of processing, one or more lysine residues are methylated.

Forms part of the ribosomal stalk which helps the ribosome interact with GTP-bound translation factors. This chain is Large ribosomal subunit protein uL11, found in Leifsonia xyli subsp. xyli (strain CTCB07).